The chain runs to 1000 residues: Isoleucine--tRNA ligase, mitochondrial (1000 aa).

Residues 1-27 (MLGAWRAAPRLRLRARFGVASVWARSA) constitute a mitochondrion transit peptide. The short motif at 102 to 112 (PYANGDPHVGH) is the 'HIGH' region element. Residues Lys-649 and Lys-652 each coordinate ATP. Positions 649 to 653 (KMSKS) match the 'KMSKS' region motif.

This sequence belongs to the class-I aminoacyl-tRNA synthetase family.

It localises to the mitochondrion matrix. The enzyme catalyses tRNA(Ile) + L-isoleucine + ATP = L-isoleucyl-tRNA(Ile) + AMP + diphosphate. Its function is as follows. Aminoacyl-tRNA synthetase that catalyzes the specific attachment of isoleucine to its cognate tRNA (tRNA(Ile)). This is Isoleucine--tRNA ligase, mitochondrial (IARS2) from Gallus gallus (Chicken).